The sequence spans 139 residues: Small ribosomal subunit protein uS11 (139 aa).

A disordered region spans residues 117–139; sequence VEDVTPIPHDGTRPKGGRRGRRV.

The protein belongs to the universal ribosomal protein uS11 family. Part of the 30S ribosomal subunit.

Functionally, located on the platform of the 30S subunit. This Thermococcus onnurineus (strain NA1) protein is Small ribosomal subunit protein uS11.